Here is a 266-residue protein sequence, read N- to C-terminus: Apolipoprotein A-I (266 aa).

A signal peptide spans 1 to 18; that stretch reads MKAVVLTLAVLFLTGSQA. 2 consecutive repeat copies span residues 67 to 88 and 89 to 110. Positions 67-266 are 10 X approximate tandem repeats; the sequence is LKLLDNWDSL…DEATKKLNSQ (200 aa). At Met-109 the chain carries Methionine sulfoxide. One copy of the 3; half-length repeat lies at 111–121; that stretch reads KDLEEVKKKVQ. 5 consecutive repeat copies span residues 122–143, 144–165, 166–187, 188–209, and 210–231. The stretch at 232-242 is one 9; half-length repeat; it reads PALEDLRQGLL. The stretch at 243-266 is repeat 10; the sequence is PVLENFRDSLLAAVDEATKKLNSQ.

This sequence belongs to the apolipoprotein A1/A4/E family. As to quaternary structure, homodimer. Interacts with APOA1BP and CLU. Component of a sperm activating protein complex (SPAP), consisting of APOA1, an immunoglobulin heavy chain, an immunoglobulin light chain and albumin. Interacts with NDRG1. Interacts with SCGB3A2. Interacts with NAXE and YJEFN3. Post-translationally, glycosylated. Palmitoylated. In terms of processing, phosphorylation sites are present in the extracellular medium.

The protein localises to the secreted. Functionally, participates in the reverse transport of cholesterol from tissues to the liver for excretion by promoting cholesterol efflux from tissues and by acting as a cofactor for the lecithin cholesterol acyltransferase (LCAT). As part of the SPAP complex, activates spermatozoa motility. The protein is Apolipoprotein A-I (APOA1) of Neomonachus schauinslandi (Hawaiian monk seal).